A 342-amino-acid polypeptide reads, in one-letter code: Large ribosomal subunit protein uL10 (342 aa).

The segment at 212-342 (EYIDMLQKAY…ALAGLSALFG (131 aa)) is required for interaction with ribosomal protein L12 dimers. The segment covering 299–308 (QAQVAVATQP) has biased composition (polar residues). Residues 299-342 (QAQVAVATQPSEEEKKEEEKTEEEEKEEEASEEEALAGLSALFG) are disordered. Residues 318–333 (KTEEEEKEEEASEEEA) show a composition bias toward acidic residues.

Belongs to the universal ribosomal protein uL10 family. As to quaternary structure, part of the 50S ribosomal subunit, binds large rRNA. Forms the ribosomal stalk which helps the ribosome interact with GTP-bound translation factors. Forms a heptameric L10(L12)2(L12)2(L12)2 complex, where L10 forms an elongated spine to which the L12 dimers bind in a sequential fashion.

Its function is as follows. Forms the large subunit's ribosomal stalk, playing a central role in the interaction of the ribosome with elongation factors; the stalk complex of P.horikoshii binds to E.coli large subunits and confers on them the ability to interact with eukaryotic elongation factors. Each succesive L12 dimer bound along the P0 spine increases the GTPase activity of elongation factors and increases translation by reconsituted ribosomes, although the first site is the most stimulatory. The polypeptide is Large ribosomal subunit protein uL10 (Pyrococcus horikoshii (strain ATCC 700860 / DSM 12428 / JCM 9974 / NBRC 100139 / OT-3)).